Consider the following 468-residue polypeptide: Aldehyde dehydrogenase family 3 member B1 (468 aa).

M1 is subject to N-acetylmethionine. Position 188 to 193 (188 to 193 (GNPQVG)) interacts with NAD(+). Residues E210 and C244 contribute to the active site. The S-palmitoyl cysteine moiety is linked to residue C463. At C465 the chain carries Cysteine methyl ester. A lipid anchor (S-geranylgeranyl cysteine) is attached at C465. Residues 466–468 (TLL) constitute a propeptide, removed in mature form.

Belongs to the aldehyde dehydrogenase family. Post-translationally, dually lipidated in the C-terminus; prenylation occurs prior to, and is a prerequisite for palmitoylation. It is also required for activity towards long-chain substrates.

The protein localises to the cell membrane. It catalyses the reaction an aldehyde + NAD(+) + H2O = a carboxylate + NADH + 2 H(+). It carries out the reaction a long-chain fatty aldehyde + NAD(+) + H2O = a long-chain fatty acid + NADH + 2 H(+). The enzyme catalyses a medium-chain fatty aldehyde + NAD(+) + H2O = a medium-chain fatty acid + NADH + 2 H(+). The catalysed reaction is octanal + NAD(+) + H2O = octanoate + NADH + 2 H(+). It catalyses the reaction nonanal + NAD(+) + H2O = nonanoate + NADH + 2 H(+). It carries out the reaction hexadecanoate + NADH + 2 H(+) = hexadecanal + NAD(+) + H2O. The enzyme catalyses (2E)-octenal + NAD(+) + H2O = (2E)-octenoate + NADH + 2 H(+). The catalysed reaction is (E)-non-2-enal + NAD(+) + H2O = (E)-non-2-enoate + NADH + 2 H(+). It catalyses the reaction (E)-4-hydroxynon-2-enal + NAD(+) + H2O = (E)-4-hydroxynon-2-enoate + NADH + 2 H(+). It carries out the reaction (2E)-hexadecenal + NAD(+) + H2O = (E)-hexadec-2-enoate + NADH + 2 H(+). The enzyme catalyses benzaldehyde + NAD(+) + H2O = benzoate + NADH + 2 H(+). The catalysed reaction is an aldehyde + NADP(+) + H2O = a carboxylate + NADPH + 2 H(+). It catalyses the reaction a medium-chain fatty aldehyde + NADP(+) + H2O = a medium-chain fatty acid + NADPH + 2 H(+). It carries out the reaction hexanal + NADP(+) + H2O = hexanoate + NADPH + 2 H(+). The enzyme catalyses octanal + NADP(+) + H2O = octanoate + NADPH + 2 H(+). The catalysed reaction is nonanal + NADP(+) + H2O = nonanoate + NADPH + 2 H(+). It catalyses the reaction (2E)-octenal + NADP(+) + H2O = (2E)-octenoate + NADPH + 2 H(+). It carries out the reaction (E)-non-2-enal + NADP(+) + H2O = (E)-non-2-enoate + NADPH + 2 H(+). The enzyme catalyses (E)-4-hydroxynon-2-enal + NADP(+) + H2O = (E)-4-hydroxynon-2-enoate + NADPH + 2 H(+). The catalysed reaction is benzaldehyde + NADP(+) + H2O = benzoate + NADPH + 2 H(+). The protein operates within alcohol metabolism; ethanol degradation; acetate from ethanol: step 2/2. Functionally, oxidizes medium and long chain saturated and unsaturated fatty aldehydes generated in the plasma membrane into non-toxic fatty acids. May have a protective role against the cytotoxicity induced by lipid peroxidation. Short-chain fatty aldehydes are not good substrates. Can use both NADP(+) and NAD(+) as electron acceptor in vitro, however in vivo preference will depend on their tissue levels. Low activity towards acetaldehyde and 3,4-dihydroxyphenylacetaldehyde. Able to metabolize aromatic aldehydes such as benzaldehyde to their acid form. The polypeptide is Aldehyde dehydrogenase family 3 member B1 (ALDH3B1) (Bos taurus (Bovine)).